The primary structure comprises 557 residues: Copine-4 (557 aa).

C2 domains are found at residues 3–131 (KMSN…SKSL) and 137–264 (TAGK…VQWE). 5 residues coordinate Ca(2+): aspartate 170, aspartate 176, aspartate 232, aspartate 234, and aspartate 240. The region spanning 305 to 507 (QIQFTVAIDF…VLRDIVQFVP (203 aa)) is the VWFA domain.

It belongs to the copine family. In terms of assembly, interacts (via VWFA domain) with ACTB, BCOR, BICD2, CCDC22, CDC42BPB, CEP162, MYCBP2, NONO, PDCD6, PITPNM2, RDX, SKIL, SKT, SPTBN1, UBE2O and WTAP. Ca(2+) is required as a cofactor.

In terms of biological role, probable calcium-dependent phospholipid-binding protein that may play a role in calcium-mediated intracellular processes. This Mus musculus (Mouse) protein is Copine-4.